The following is a 257-amino-acid chain: Imidazole glycerol phosphate synthase subunit HisF (257 aa).

Active-site residues include Asp-11 and Asp-130.

It belongs to the HisA/HisF family. In terms of assembly, heterodimer of HisH and HisF.

Its subcellular location is the cytoplasm. It catalyses the reaction 5-[(5-phospho-1-deoxy-D-ribulos-1-ylimino)methylamino]-1-(5-phospho-beta-D-ribosyl)imidazole-4-carboxamide + L-glutamine = D-erythro-1-(imidazol-4-yl)glycerol 3-phosphate + 5-amino-1-(5-phospho-beta-D-ribosyl)imidazole-4-carboxamide + L-glutamate + H(+). It functions in the pathway amino-acid biosynthesis; L-histidine biosynthesis; L-histidine from 5-phospho-alpha-D-ribose 1-diphosphate: step 5/9. Its function is as follows. IGPS catalyzes the conversion of PRFAR and glutamine to IGP, AICAR and glutamate. The HisF subunit catalyzes the cyclization activity that produces IGP and AICAR from PRFAR using the ammonia provided by the HisH subunit. In Psychromonas ingrahamii (strain DSM 17664 / CCUG 51855 / 37), this protein is Imidazole glycerol phosphate synthase subunit HisF.